A 566-amino-acid chain; its full sequence is DNA ligase B (566 aa).

Lysine 125 (N6-AMP-lysine intermediate) is an active-site residue.

The protein belongs to the NAD-dependent DNA ligase family. LigB subfamily.

The enzyme catalyses NAD(+) + (deoxyribonucleotide)n-3'-hydroxyl + 5'-phospho-(deoxyribonucleotide)m = (deoxyribonucleotide)n+m + AMP + beta-nicotinamide D-nucleotide.. In terms of biological role, catalyzes the formation of phosphodiester linkages between 5'-phosphoryl and 3'-hydroxyl groups in double-stranded DNA using NAD as a coenzyme and as the energy source for the reaction. This Pseudomonas putida (strain ATCC 700007 / DSM 6899 / JCM 31910 / BCRC 17059 / LMG 24140 / F1) protein is DNA ligase B.